Here is a 396-residue protein sequence, read N- to C-terminus: S-adenosylmethionine synthase (396 aa).

H16 contributes to the ATP binding site. Position 18 (D18) interacts with Mg(2+). E44 contributes to the K(+) binding site. 2 residues coordinate L-methionine: E57 and Q100. The flexible loop stretch occupies residues 100–110 (QSVDIAQGVDR). Residues 165 to 167 (DAK), D240, 246 to 247 (RK), A263, and K267 contribute to the ATP site. Position 240 (D240) interacts with L-methionine. K271 lines the L-methionine pocket.

It belongs to the AdoMet synthase family. As to quaternary structure, homotetramer; dimer of dimers. Mg(2+) is required as a cofactor. Requires K(+) as cofactor.

Its subcellular location is the cytoplasm. It carries out the reaction L-methionine + ATP + H2O = S-adenosyl-L-methionine + phosphate + diphosphate. It participates in amino-acid biosynthesis; S-adenosyl-L-methionine biosynthesis; S-adenosyl-L-methionine from L-methionine: step 1/1. Catalyzes the formation of S-adenosylmethionine (AdoMet) from methionine and ATP. The overall synthetic reaction is composed of two sequential steps, AdoMet formation and the subsequent tripolyphosphate hydrolysis which occurs prior to release of AdoMet from the enzyme. In Pseudomonas syringae pv. syringae (strain B728a), this protein is S-adenosylmethionine synthase.